The sequence spans 363 residues: Pyrimidine monooxygenase RutA (363 aa).

FMN-binding positions include Ile-49–Lys-50, Asn-115, Glu-124, Arg-140–Tyr-141, and Ser-190.

The protein belongs to the NtaA/SnaA/DszA monooxygenase family. RutA subfamily.

The catalysed reaction is uracil + FMNH2 + NADH + O2 = (Z)-3-ureidoacrylate + FMN + NAD(+) + H2O + H(+). It catalyses the reaction thymine + FMNH2 + NADH + O2 = (Z)-2-methylureidoacrylate + FMN + NAD(+) + H2O + H(+). In terms of biological role, catalyzes the pyrimidine ring opening between N-3 and C-4 by an unusual flavin hydroperoxide-catalyzed mechanism, adding oxygen atoms in the process to yield ureidoacrylate peracid, that immediately reacts with FMN forming ureidoacrylate and FMN-N(5)-oxide. The FMN-N(5)-oxide reacts spontaneously with NADH to produce FMN. Requires the flavin reductase RutF to regenerate FMN in vivo. This is Pyrimidine monooxygenase RutA from Enterobacter cloacae subsp. cloacae (strain ATCC 13047 / DSM 30054 / NBRC 13535 / NCTC 10005 / WDCM 00083 / NCDC 279-56).